Reading from the N-terminus, the 729-residue chain is Phosphoribosylformylglycinamidine synthase subunit PurL (729 aa).

His-54 is a catalytic residue. ATP is bound by residues Tyr-57 and Lys-96. Glu-98 provides a ligand contact to Mg(2+). Substrate contacts are provided by residues 99 to 102 and Arg-121; that span reads SHNH. Catalysis depends on His-100, which acts as the Proton acceptor. Asp-122 is a Mg(2+) binding site. Substrate is bound at residue Gln-245. Asp-273 contributes to the Mg(2+) binding site. 317 to 319 is a binding site for substrate; that stretch reads ETQ. ATP is bound by residues Asp-495 and Gly-532. Residue Asn-533 participates in Mg(2+) binding. Ser-535 is a substrate binding site.

It belongs to the FGAMS family. Monomer. Part of the FGAM synthase complex composed of 1 PurL, 1 PurQ and 2 PurS subunits.

The protein localises to the cytoplasm. The enzyme catalyses N(2)-formyl-N(1)-(5-phospho-beta-D-ribosyl)glycinamide + L-glutamine + ATP + H2O = 2-formamido-N(1)-(5-O-phospho-beta-D-ribosyl)acetamidine + L-glutamate + ADP + phosphate + H(+). The protein operates within purine metabolism; IMP biosynthesis via de novo pathway; 5-amino-1-(5-phospho-D-ribosyl)imidazole from N(2)-formyl-N(1)-(5-phospho-D-ribosyl)glycinamide: step 1/2. Its function is as follows. Part of the phosphoribosylformylglycinamidine synthase complex involved in the purines biosynthetic pathway. Catalyzes the ATP-dependent conversion of formylglycinamide ribonucleotide (FGAR) and glutamine to yield formylglycinamidine ribonucleotide (FGAM) and glutamate. The FGAM synthase complex is composed of three subunits. PurQ produces an ammonia molecule by converting glutamine to glutamate. PurL transfers the ammonia molecule to FGAR to form FGAM in an ATP-dependent manner. PurS interacts with PurQ and PurL and is thought to assist in the transfer of the ammonia molecule from PurQ to PurL. The chain is Phosphoribosylformylglycinamidine synthase subunit PurL from Staphylococcus carnosus (strain TM300).